The following is a 260-amino-acid chain: Ribosomal RNA small subunit methyltransferase G (260 aa).

Residues G94, F99, 117–119 (DST), 145–146 (AE), and R164 each bind S-adenosyl-L-methionine. Residues 236 to 260 (APTPPPYPRSPGTPKRQPLGQSNRP) are disordered. The segment covering 237 to 246 (PTPPPYPRSP) has biased composition (pro residues).

The protein belongs to the methyltransferase superfamily. RNA methyltransferase RsmG family.

It localises to the cytoplasm. Specifically methylates the N7 position of a guanine in 16S rRNA. In Synechococcus sp. (strain JA-2-3B'a(2-13)) (Cyanobacteria bacterium Yellowstone B-Prime), this protein is Ribosomal RNA small subunit methyltransferase G.